The sequence spans 122 residues: EPIDERMAL PATTERNING FACTOR-like protein 1 (122 aa).

A signal peptide spans Met1–Ser26. 3 cysteine pairs are disulfide-bonded: Cys55–Cys113, Cys59–Cys65, and Cys62–Cys115.

It belongs to the plant cysteine rich small secretory peptide family. Epidermal patterning factor subfamily.

The protein resides in the secreted. Functionally, controls stomatal patterning. The chain is EPIDERMAL PATTERNING FACTOR-like protein 1 from Arabidopsis thaliana (Mouse-ear cress).